The primary structure comprises 822 residues: Microcephalin (822 aa).

In terms of domain architecture, BRCT 1 spans 10 to 99; that stretch reads AFLKDVVAYV…ALVDESLFPA (90 aa). Disordered regions lie at residues 182-203, 219-243, and 266-295; these read MKEKRENLSPTSSQMLEQSQQN, PLSSDESFASGSHSSFGDSCGDQER, and SSFYGSASPNHLRQPRPQKAPDSPSKESIN. Polar residues-rich tracts occupy residues 189–203 and 219–235; these read LSPTSSQMLEQSQQN and PLSSDESFASGSHSSFG. Phosphoserine occurs at positions 273, 290, and 327. Position 329 is a phosphothreonine (T329). Disordered stretches follow at residues 335 to 366, 498 to 567, and 594 to 636; these read EHQVRLGPKNSSAKRKRAADLGSSPKGKLKKR, NDSP…SPED, and TGYS…PTRT. The segment covering 522–541 has biased composition (polar residues); that stretch reads HPDTLSSSAHHITPLKGNST. 2 stretches are compositionally biased toward basic and acidic residues: residues 542–553 and 625–634; these read ETRDPGDGKGSP and KKSEKEEKPT. 2 consecutive BRCT domains span residues 627–717 and 738–820; these read SEKE…PFEL and YQGT…NYQL.

As to quaternary structure, interacts with CDC27 and maybe other components of the APC/C complex. Interacts with histone variant H2AX under DNA damage conditions. In terms of tissue distribution, high levels of expression are found in the developing forebrain and, in particular, in the walls of the lateral ventricles.

The protein resides in the cytoplasm. The protein localises to the cytoskeleton. It is found in the microtubule organizing center. Its subcellular location is the centrosome. Functionally, implicated in chromosome condensation and DNA damage induced cellular responses. May play a role in neurogenesis and regulation of the size of the cerebral cortex. The protein is Microcephalin of Mus musculus (Mouse).